Reading from the N-terminus, the 285-residue chain is Acetylglutamate kinase (285 aa).

Residues 63–64 (GG), Arg85, and Asn178 contribute to the substrate site.

This sequence belongs to the acetylglutamate kinase family. ArgB subfamily.

It localises to the cytoplasm. It catalyses the reaction N-acetyl-L-glutamate + ATP = N-acetyl-L-glutamyl 5-phosphate + ADP. It participates in amino-acid biosynthesis; L-arginine biosynthesis; N(2)-acetyl-L-ornithine from L-glutamate: step 2/4. Functionally, catalyzes the ATP-dependent phosphorylation of N-acetyl-L-glutamate. In Synechococcus sp. (strain CC9311), this protein is Acetylglutamate kinase.